A 138-amino-acid chain; its full sequence is Acidic phospholipase A2 6 (138 aa).

The first 16 residues, 1 to 16 (MRTLWIMAVLLVGVEG), serve as a signal peptide directing secretion. Disulfide bonds link cysteine 42/cysteine 131, cysteine 44/cysteine 60, cysteine 59/cysteine 111, cysteine 65/cysteine 138, cysteine 66/cysteine 104, cysteine 73/cysteine 97, and cysteine 91/cysteine 102. Ca(2+) is bound by residues tyrosine 43, glycine 45, and glycine 47. Histidine 63 is an active-site residue. A Ca(2+)-binding site is contributed by aspartate 64. Aspartate 105 is an active-site residue.

The protein belongs to the phospholipase A2 family. Group II subfamily. D49 sub-subfamily. In terms of assembly, homodimer. Ca(2+) is required as a cofactor. In terms of tissue distribution, expressed by the venom gland.

It localises to the secreted. The enzyme catalyses a 1,2-diacyl-sn-glycero-3-phosphocholine + H2O = a 1-acyl-sn-glycero-3-phosphocholine + a fatty acid + H(+). Its function is as follows. Snake venom phospholipase A2 (PLA2) that has high lipolytic activity. PLA2 catalyzes the calcium-dependent hydrolysis of the 2-acyl groups in 3-sn-phosphoglycerides. In Craspedocephalus gramineus (Bamboo pit viper), this protein is Acidic phospholipase A2 6.